The primary structure comprises 233 residues: Small ribosomal subunit protein uS2c (233 aa).

It belongs to the universal ribosomal protein uS2 family.

Its subcellular location is the plastid. It localises to the apicoplast. This is Small ribosomal subunit protein uS2c from Toxoplasma gondii.